The chain runs to 265 residues: Ribosomal RNA small subunit methyltransferase A (265 aa).

S-adenosyl-L-methionine-binding residues include H13, L15, G40, E61, D85, and N103.

This sequence belongs to the class I-like SAM-binding methyltransferase superfamily. rRNA adenine N(6)-methyltransferase family. RsmA subfamily.

The protein localises to the cytoplasm. The enzyme catalyses adenosine(1518)/adenosine(1519) in 16S rRNA + 4 S-adenosyl-L-methionine = N(6)-dimethyladenosine(1518)/N(6)-dimethyladenosine(1519) in 16S rRNA + 4 S-adenosyl-L-homocysteine + 4 H(+). Specifically dimethylates two adjacent adenosines (A1518 and A1519) in the loop of a conserved hairpin near the 3'-end of 16S rRNA in the 30S particle. May play a critical role in biogenesis of 30S subunits. This is Ribosomal RNA small subunit methyltransferase A from Bordetella bronchiseptica (strain ATCC BAA-588 / NCTC 13252 / RB50) (Alcaligenes bronchisepticus).